The following is a 545-amino-acid chain: CTP synthase (545 aa).

The amidoligase domain stretch occupies residues 1-265 (MSRFIFVTGG…DAIVVEKFGL (265 aa)). Position 13 (S13) interacts with CTP. A UTP-binding site is contributed by S13. 14–19 (SLGKGI) contributes to the ATP binding site. L-glutamine is bound at residue Y54. An ATP-binding site is contributed by D71. The Mg(2+) site is built by D71 and E139. Residues 146-148 (DIE), 186-191 (KTKPTQ), and K222 contribute to the CTP site. Residues 186–191 (KTKPTQ) and K222 contribute to the UTP site. Residues 290 to 541 (TVGMVGKYIE…VAAALAEQKA (252 aa)) enclose the Glutamine amidotransferase type-1 domain. An L-glutamine-binding site is contributed by G351. C378 serves as the catalytic Nucleophile; for glutamine hydrolysis. Residues 379-382 (LGMQ), E402, and R469 contribute to the L-glutamine site. Active-site residues include H514 and E516.

Belongs to the CTP synthase family. As to quaternary structure, homotetramer.

It carries out the reaction UTP + L-glutamine + ATP + H2O = CTP + L-glutamate + ADP + phosphate + 2 H(+). It catalyses the reaction L-glutamine + H2O = L-glutamate + NH4(+). The enzyme catalyses UTP + NH4(+) + ATP = CTP + ADP + phosphate + 2 H(+). Its pathway is pyrimidine metabolism; CTP biosynthesis via de novo pathway; CTP from UDP: step 2/2. With respect to regulation, allosterically activated by GTP, when glutamine is the substrate; GTP has no effect on the reaction when ammonia is the substrate. The allosteric effector GTP functions by stabilizing the protein conformation that binds the tetrahedral intermediate(s) formed during glutamine hydrolysis. Inhibited by the product CTP, via allosteric rather than competitive inhibition. In terms of biological role, catalyzes the ATP-dependent amination of UTP to CTP with either L-glutamine or ammonia as the source of nitrogen. Regulates intracellular CTP levels through interactions with the four ribonucleotide triphosphates. The protein is CTP synthase of Alcanivorax borkumensis (strain ATCC 700651 / DSM 11573 / NCIMB 13689 / SK2).